Here is a 318-residue protein sequence, read N- to C-terminus: Ubiquitin-conjugating enzyme E2 J1 (318 aa).

The Cytoplasmic segment spans residues M1–T282. The 159-residue stretch at P10–G168 folds into the UBC core domain. C91 functions as the Glycyl thioester intermediate in the catalytic mechanism. At S184 the chain carries Phosphoserine. Polar residues predominate over residues P215 to S233. The disordered stretch occupies residues P215–E283. Positions S249–P269 are enriched in low complexity. Phosphoserine occurs at positions 266 and 268. The chain crosses the membrane as a helical; Anchor for type IV membrane protein span at residues E283–F303. At R304–L318 the chain is on the lumenal side.

It belongs to the ubiquitin-conjugating enzyme family. In terms of assembly, component of the HRD1 complex, which comprises at least SYNV1/HRD1, DERL1/2, FAM8A1, HERPUD1/HERP, OS9, SEL1L and UBE2J1. Interacts with E3 ligase RNF26. Interacts with E3 ligase RNF133. In terms of processing, phosphorylated at Ser-184 in a cytosolic stress-dependent manner by MAP kinase p38 MAPKAPK2. Phosphorylated UBE2J1 is rapidly ubiquitinated and subsequently degraded by the proteasome.

The protein resides in the endoplasmic reticulum membrane. It carries out the reaction S-ubiquitinyl-[E1 ubiquitin-activating enzyme]-L-cysteine + [E2 ubiquitin-conjugating enzyme]-L-cysteine = [E1 ubiquitin-activating enzyme]-L-cysteine + S-ubiquitinyl-[E2 ubiquitin-conjugating enzyme]-L-cysteine.. The protein operates within protein modification; protein ubiquitination. Its function is as follows. Catalyzes the covalent attachment of ubiquitin to other proteins. Functions in the selective degradation of misfolded membrane proteins from the endoplasmic reticulum (ERAD) and is essential for cells to recover from ER stress. Plays a role in MAPKAPK2-dependent translational control of TNF-alpha synthesis. Also acts as a platform for perinuclear positioning of the endosomal system by mediating ubiquitination of SQSTM1 through interaction with the E3 ubiquitin-protein ligase RNF26. Plays a role in male fecundity through the interaction with the E3 ubiquitin-protein ligase RNF133. The polypeptide is Ubiquitin-conjugating enzyme E2 J1 (Ube2j1) (Mus musculus (Mouse)).